The sequence spans 409 residues: Tyrosine--tRNA ligase (409 aa).

Residues 54–63 (PTAPDIHLGH) carry the 'HIGH' region motif. The 'KMSKS' region signature appears at 238-242 (KMSKS). Residue Lys241 coordinates ATP. Positions 347 to 407 (MGILHVLRAS…GKRKFARVNL (61 aa)) constitute an S4 RNA-binding domain.

Belongs to the class-I aminoacyl-tRNA synthetase family. TyrS type 2 subfamily. Homodimer.

The protein localises to the cytoplasm. The enzyme catalyses tRNA(Tyr) + L-tyrosine + ATP = L-tyrosyl-tRNA(Tyr) + AMP + diphosphate + H(+). Catalyzes the attachment of tyrosine to tRNA(Tyr) in a two-step reaction: tyrosine is first activated by ATP to form Tyr-AMP and then transferred to the acceptor end of tRNA(Tyr). The protein is Tyrosine--tRNA ligase of Bordetella avium (strain 197N).